The chain runs to 106 residues: MMTLRDLINKLLGRETASANTARERLQLVLAHDRVDMSSLTTDLLDKMRKEILDVVAKYVEIDFEEVAVSLETEDRMTALVANLPIKRTLTGEIEFKKNEDTQKKK.

The protein belongs to the MinE family.

Prevents the cell division inhibition by proteins MinC and MinD at internal division sites while permitting inhibition at polar sites. This ensures cell division at the proper site by restricting the formation of a division septum at the midpoint of the long axis of the cell. The polypeptide is Cell division topological specificity factor (Prochlorococcus marinus subsp. pastoris (strain CCMP1986 / NIES-2087 / MED4)).